A 221-amino-acid polypeptide reads, in one-letter code: DNA mismatch repair protein MutH (221 aa).

It belongs to the MutH family.

The protein localises to the cytoplasm. Functionally, sequence-specific endonuclease that cleaves unmethylated GATC sequences. It is involved in DNA mismatch repair. This chain is DNA mismatch repair protein MutH, found in Vibrio cholerae serotype O1 (strain ATCC 39315 / El Tor Inaba N16961).